Consider the following 529-residue polypeptide: VIN3-like protein 3 (529 aa).

The short motif at 97-104 is the Nuclear localization signal element; that stretch reads PKRQKRDL. A PHD-type zinc finger spans residues 137–207; sequence RCSCCICFKY…CFNCVSCGKT (71 aa). The Nuclear localization signal motif lies at 214 to 221; the sequence is LKKQLIIA. Positions 312–411 constitute a Fibronectin type-III domain; that stretch reads GSMKIRIESV…FIVSTKTLQD (100 aa). Residues 421–529 are VIN3-Interacting Domain (VID); the sequence is MSNCNNANKM…AGVSLILLQD (109 aa).

Interacts with VIN3.

It is found in the nucleus. Involved in both the vernalization and photoperiod pathways by regulating gene expression. The protein is VIN3-like protein 3 (VIL3) of Arabidopsis thaliana (Mouse-ear cress).